A 211-amino-acid chain; its full sequence is Large ribosomal subunit protein bL25 (211 aa).

The disordered stretch occupies residues 186 to 211 (GRALQSMDAAESAVEQPGEQPATAAG).

Belongs to the bacterial ribosomal protein bL25 family. CTC subfamily. In terms of assembly, part of the 50S ribosomal subunit; part of the 5S rRNA/L5/L18/L25 subcomplex. Contacts the 5S rRNA. Binds to the 5S rRNA independently of L5 and L18.

In terms of biological role, this is one of the proteins that binds to the 5S RNA in the ribosome where it forms part of the central protuberance. In Gloeobacter violaceus (strain ATCC 29082 / PCC 7421), this protein is Large ribosomal subunit protein bL25.